Reading from the N-terminus, the 523-residue chain is Coatomer subunit delta-2 (523 aa).

The tract at residues 218–243 (DSFASKPKGRPSAAATAPGKGLGMKL) is disordered. One can recognise an MHD domain in the interval 282–523 (SDPVTVTIEE…RLVTANYQVV (242 aa)).

This sequence belongs to the adaptor complexes medium subunit family. Delta-COP subfamily. In terms of assembly, oligomeric complex that consists of at least the alpha, beta, beta', gamma, delta, epsilon and zeta subunits.

It localises to the cytoplasm. It is found in the golgi apparatus membrane. The protein localises to the cytoplasmic vesicle. Its subcellular location is the COPI-coated vesicle membrane. The coatomer is a cytosolic protein complex that binds to dilysine motifs and reversibly associates with Golgi non-clathrin-coated vesicles, which further mediate biosynthetic protein transport from the ER, via the Golgi up to the trans Golgi network. Coatomer complex is required for budding from Golgi membranes, and is essential for the retrograde Golgi-to-ER transport of dilysine-tagged proteins. The sequence is that of Coatomer subunit delta-2 from Oryza sativa subsp. japonica (Rice).